We begin with the raw amino-acid sequence, 318 residues long: Methionyl-tRNA formyltransferase (318 aa).

(6S)-5,6,7,8-tetrahydrofolate is bound at residue 112–115 (SILP).

The protein belongs to the Fmt family.

The catalysed reaction is L-methionyl-tRNA(fMet) + (6R)-10-formyltetrahydrofolate = N-formyl-L-methionyl-tRNA(fMet) + (6S)-5,6,7,8-tetrahydrofolate + H(+). Attaches a formyl group to the free amino group of methionyl-tRNA(fMet). The formyl group appears to play a dual role in the initiator identity of N-formylmethionyl-tRNA by promoting its recognition by IF2 and preventing the misappropriation of this tRNA by the elongation apparatus. The protein is Methionyl-tRNA formyltransferase of Shewanella sp. (strain ANA-3).